A 284-amino-acid chain; its full sequence is Bifunctional protein FolD 1 (284 aa).

NADP(+) contacts are provided by residues 166 to 168 (GAS) and isoleucine 232.

The protein belongs to the tetrahydrofolate dehydrogenase/cyclohydrolase family. As to quaternary structure, homodimer.

It catalyses the reaction (6R)-5,10-methylene-5,6,7,8-tetrahydrofolate + NADP(+) = (6R)-5,10-methenyltetrahydrofolate + NADPH. The catalysed reaction is (6R)-5,10-methenyltetrahydrofolate + H2O = (6R)-10-formyltetrahydrofolate + H(+). The protein operates within one-carbon metabolism; tetrahydrofolate interconversion. In terms of biological role, catalyzes the oxidation of 5,10-methylenetetrahydrofolate to 5,10-methenyltetrahydrofolate and then the hydrolysis of 5,10-methenyltetrahydrofolate to 10-formyltetrahydrofolate. This chain is Bifunctional protein FolD 1, found in Pseudomonas syringae pv. tomato (strain ATCC BAA-871 / DC3000).